Reading from the N-terminus, the 106-residue chain is Nucleoid-associated protein Abu_0429 (106 aa).

The protein belongs to the YbaB/EbfC family. Homodimer.

It is found in the cytoplasm. Its subcellular location is the nucleoid. Binds to DNA and alters its conformation. May be involved in regulation of gene expression, nucleoid organization and DNA protection. The chain is Nucleoid-associated protein Abu_0429 from Aliarcobacter butzleri (strain RM4018) (Arcobacter butzleri).